Reading from the N-terminus, the 172-residue chain is MLSRSHSNATMSTTRHRLLATASRFVETLESLDMDAMLAVRSSTCLHHMCCPSFRNYSITNDQTREALPQWKATIKKYKFGVLDDSQTLVDEQARKVMIRAETAAETTVGDYNNEYVFILRMTEDCNAVDEIWEFYDTIRLRDLRHRLEAGHVPIGVDAPAPFTTTASPAAL.

The protein belongs to the trt14 isomerase family. As to quaternary structure, homodimer.

Its pathway is secondary metabolite biosynthesis; terpenoid biosynthesis. Functionally, part of the gene cluster B that mediates the biosynthesis of the fungal meroterpenoid acetoxydehydroaustin. The first step of the pathway is the synthesis of 3,5-dimethylorsellinic acid by the polyketide synthase ausA. 3,5-dimethylorsellinic acid is then prenylated by the polyprenyl transferase ausN. Further epoxidation by the FAD-dependent monooxygenase ausM and cyclization by the probable terpene cyclase ausL lead to the formation of protoaustinoid A. Protoaustinoid A is then oxidized to spiro-lactone preaustinoid A3 by the combined action of the FAD-binding monooxygenases ausB and ausC, and the dioxygenase ausE. Acid-catalyzed keto-rearrangement and ring contraction of the tetraketide portion of preaustinoid A3 by ausJ lead to the formation of preaustinoid A4. The aldo-keto reductase ausK, with the help of ausH, is involved in the next step by transforming preaustinoid A4 into isoaustinone which is in turn hydroxylated by the P450 monooxygenase ausI to form austinolide. The cytochrome P450 monooxygenase ausG then modifies austinolide to austinol. Austinol is further acetylated to austin by the O-acetyltransferase ausP, which spontaneously changes to dehydroaustin. The cytochrome P450 monooxygenase then converts dehydroaustin is into 7-dehydrodehydroaustin. The hydroxylation catalyzed by ausR permits the second O-acetyltransferase ausQ to add an additional acetyl group to the molecule, leading to the formation of acetoxydehydroaustin. Due to genetic rearrangements of the clusters and the subsequent loss of some enzymes, the end product of the Penicillium brasilianum austinoid biosynthesis clusters is acetoxydehydroaustin. In Penicillium brasilianum, this protein is Austinoid biosynthesis clusters protein J.